We begin with the raw amino-acid sequence, 92 residues long: MLRIVPRNIFILFIIAYRKIISPMYGPVCKYYPSCSEYCQNSIANNGVFLGAAYTFMRLVRCNPWSKGGVDMPRVSTKYRVNKFGFASRKNV.

Belongs to the UPF0161 family.

It localises to the cell membrane. Could be involved in insertion of integral membrane proteins into the membrane. In Tropheryma whipplei (strain TW08/27) (Whipple's bacillus), this protein is Putative membrane protein insertion efficiency factor.